The following is a 309-amino-acid chain: MSIRHATLHQLKIFAAVARHMSFARAAEELHLTPPALSIQVRQLAEAVGQPLFDQIGKKIYLTAAGEALTSACHDILDRLEYFTQEIAALQGLEKGSLKVATLSTTKYFIPRMLGGFCTEHPGVATVLFIGNREVLLERLARNQDDLYILGQPPEHMNVVAEAFADNPLVVVARLDHPLTQEKDIEPSRLRDVPFILREPGSGTRLAAEKFFEQHGVILKTRMEFGSNEAVKQSVAGGLGITVLSASTIRAELASGKLAILDVRGFPLERKWYAVYPAGKRISPRTKAFMEYLFAASADGENGPSLPKP.

The HTH lysR-type domain occupies 6–63; the sequence is ATLHQLKIFAAVARHMSFARAAEELHLTPPALSIQVRQLAEAVGQPLFDQIGKKIYLT. Positions 23-42 form a DNA-binding region, H-T-H motif; that stretch reads FARAAEELHLTPPALSIQVR.

This sequence belongs to the LysR transcriptional regulatory family.

Its function is as follows. Trans-acting transcriptional regulator of RuBisCO genes (rbcL1S1) expression. In Acidithiobacillus ferrooxidans (Thiobacillus ferrooxidans), this protein is RuBisCO operon transcriptional regulator (rbcR).